The chain runs to 368 residues: Probable endopolygalacturonase I (368 aa).

An N-terminal signal peptide occupies residues 1–18; that stretch reads MRSVEILGLAALGSLVAA. Positions 19–31 are excised as a propeptide; it reads APSPSRVSNSAKK. Cys35 and Cys50 are joined by a disulfide. PbH1 repeat units lie at residues 162-192 and 193-214; these read ATNLQLTDITIDNSDGDENGGHNTDAFDIGE and SNGVYIRGAVVKNQDDCIAINS. Asp207 acts as the Proton donor in catalysis. An intrachain disulfide couples Cys209 to Cys225. The active site involves His229. PbH1 repeat units follow at residues 244-265, 273-295, and 307-328; these read VKNVTITDSTISDSDNGVRIKT, VGDVTYSNIKLSNIAKYGIVIEQ, and TTGVPITGLTIDGITGSVASNA. Asn246 carries an N-linked (GlcNAc...) asparagine glycan. 2 cysteine pairs are disulfide-bonded: Cys335-Cys340 and Cys359-Cys368.

This sequence belongs to the glycosyl hydrolase 28 family.

It localises to the secreted. It catalyses the reaction (1,4-alpha-D-galacturonosyl)n+m + H2O = (1,4-alpha-D-galacturonosyl)n + (1,4-alpha-D-galacturonosyl)m.. Involved in maceration and soft-rotting of plant tissue. Hydrolyzes the 1,4-alpha glycosidic bonds of de-esterified pectate in the smooth region of the plant cell wall. This Aspergillus clavatus (strain ATCC 1007 / CBS 513.65 / DSM 816 / NCTC 3887 / NRRL 1 / QM 1276 / 107) protein is Probable endopolygalacturonase I (pgaI).